A 326-amino-acid polypeptide reads, in one-letter code: Tetraacyldisaccharide 4'-kinase (326 aa).

Position 54-61 (54-61) interacts with ATP; that stretch reads SVGGTGKT.

Belongs to the LpxK family.

It carries out the reaction a lipid A disaccharide + ATP = a lipid IVA + ADP + H(+). It participates in glycolipid biosynthesis; lipid IV(A) biosynthesis; lipid IV(A) from (3R)-3-hydroxytetradecanoyl-[acyl-carrier-protein] and UDP-N-acetyl-alpha-D-glucosamine: step 6/6. Functionally, transfers the gamma-phosphate of ATP to the 4'-position of a tetraacyldisaccharide 1-phosphate intermediate (termed DS-1-P) to form tetraacyldisaccharide 1,4'-bis-phosphate (lipid IVA). This chain is Tetraacyldisaccharide 4'-kinase, found in Rickettsia canadensis (strain McKiel).